The chain runs to 347 residues: Gamma-glutamyl hydrolase 2 (347 aa).

The signal sequence occupies residues 1 to 22 (MWSYVWLPLVALSLFKDSIIMA). One can recognise a Gamma-glutamyl hydrolase domain in the interval 45-341 (APDPNLNYRP…IGYDEVYIFT (297 aa)). Catalysis depends on C155, which acts as the Nucleophile. The active-site Proton donor is H268.

The protein belongs to the peptidase C26 family. In terms of tissue distribution, expressed in roots, in leaves, stems and siliques.

It localises to the vacuole. Its subcellular location is the secreted. It is found in the extracellular space. The protein localises to the cell wall. The catalysed reaction is (6S)-5,6,7,8-tetrahydrofolyl-(gamma-L-Glu)(n) + (n-1) H2O = (6S)-5,6,7,8-tetrahydrofolate + (n-1) L-glutamate. Cleaves the polyglutamate sidechains of folate polyglutamates in the vacuole. Is important for polyglutamyl tail length determination before vacuolar exit. Plays a role on folate stability and intracellular folate content. Has endopeptidase activity against 4-amino-10-methylpteroyl penta-, tetra-, tri- and di-gamma-L-glutamate substrates and is responsible for the production of folic acid, also called pteroylglutamic acid (PteGlu) from teroylpolyglutamates. The chain is Gamma-glutamyl hydrolase 2 (GGH2) from Arabidopsis thaliana (Mouse-ear cress).